Here is a 143-residue protein sequence, read N- to C-terminus: SsrA-binding protein (143 aa).

It belongs to the SmpB family.

Its subcellular location is the cytoplasm. In terms of biological role, required for rescue of stalled ribosomes mediated by trans-translation. Binds to transfer-messenger RNA (tmRNA), required for stable association of tmRNA with ribosomes. tmRNA and SmpB together mimic tRNA shape, replacing the anticodon stem-loop with SmpB. tmRNA is encoded by the ssrA gene; the 2 termini fold to resemble tRNA(Ala) and it encodes a 'tag peptide', a short internal open reading frame. During trans-translation Ala-aminoacylated tmRNA acts like a tRNA, entering the A-site of stalled ribosomes, displacing the stalled mRNA. The ribosome then switches to translate the ORF on the tmRNA; the nascent peptide is terminated with the 'tag peptide' encoded by the tmRNA and targeted for degradation. The ribosome is freed to recommence translation, which seems to be the essential function of trans-translation. The protein is SsrA-binding protein of Deinococcus radiodurans (strain ATCC 13939 / DSM 20539 / JCM 16871 / CCUG 27074 / LMG 4051 / NBRC 15346 / NCIMB 9279 / VKM B-1422 / R1).